A 368-amino-acid chain; its full sequence is Putative glutamate--cysteine ligase 2 (368 aa).

Belongs to the glutamate--cysteine ligase type 2 family. YbdK subfamily.

It catalyses the reaction L-cysteine + L-glutamate + ATP = gamma-L-glutamyl-L-cysteine + ADP + phosphate + H(+). Functionally, ATP-dependent carboxylate-amine ligase which exhibits weak glutamate--cysteine ligase activity. This Pseudomonas putida (strain ATCC 47054 / DSM 6125 / CFBP 8728 / NCIMB 11950 / KT2440) protein is Putative glutamate--cysteine ligase 2.